The sequence spans 71 residues: Large ribosomal subunit protein bL31 (71 aa).

Zn(2+) contacts are provided by Cys-16, Cys-18, Cys-37, and Cys-40.

The protein belongs to the bacterial ribosomal protein bL31 family. Type A subfamily. Part of the 50S ribosomal subunit. Zn(2+) serves as cofactor.

In terms of biological role, binds the 23S rRNA. This is Large ribosomal subunit protein bL31 from Pseudomonas putida (strain GB-1).